The following is a 398-amino-acid chain: MSQKLILVLNCGSSSLKGAVLDNGSGEVLLSCLAEKLNLPDAYITFKVNGEKHKVDLSAHPDHTGAVEALMEELKAHGLDSRIGAIGHRVVSGGELYSESILVDDEVIAGIEKCIPLAPLHNPAHLLGLRAAQSIFKDLPNVVVFDTSFHQTMPEVAYKYAVPQELYEKYGLRRYGAHGTSYRFVADETARFLGKDKKDLRMVIAHLGNGASITAVANGESRDTSMGLTPLEGLVMGTRSGDIDPSVFGFLAENANMTIAQITEMLNKKSGLLGISGLSNDCRTIEEEAAKGHKGAKLALDMFIYRLAKYIGSMAVAAGGLDALVFTGGIGENSDIIRERVIGYLGFLGLNIDQEANLKARFGNAGVITTADSKAVAVVIPTNEELMIAHDTARLSGL.

Asparagine 10 serves as a coordination point for Mg(2+). Lysine 17 is a binding site for ATP. Arginine 89 lines the substrate pocket. The Proton donor/acceptor role is filled by aspartate 146. ATP contacts are provided by residues 206–210 (HLGNG), 281–283 (DCR), and 329–333 (GIGEN). A Mg(2+)-binding site is contributed by glutamate 384.

This sequence belongs to the acetokinase family. As to quaternary structure, homodimer. Requires Mg(2+) as cofactor. Mn(2+) serves as cofactor.

Its subcellular location is the cytoplasm. The enzyme catalyses acetate + ATP = acetyl phosphate + ADP. It functions in the pathway metabolic intermediate biosynthesis; acetyl-CoA biosynthesis; acetyl-CoA from acetate: step 1/2. Its function is as follows. Catalyzes the formation of acetyl phosphate from acetate and ATP. Can also catalyze the reverse reaction. This Neisseria meningitidis serogroup A / serotype 4A (strain DSM 15465 / Z2491) protein is Acetate kinase 1.